The sequence spans 175 residues: Vitamin K epoxide reductase complex subunit 1-like protein 1 (175 aa).

The Cytoplasmic segment spans residues 1–12; it reads MAAPVLRVSTPR. A helical membrane pass occupies residues 13–35; that stretch reads WERIARVLVCLLGILLSLYAFHV. At 36–86 the chain is on the lumenal side; the sequence is EREHARDPSYKALCDVSSSISCSKVFGSRWGRGFGLLGSIFGNDSALNQPN. Residues cysteine 49 and cysteine 57 are joined by a disulfide bond. (S)-warfarin is bound at residue asparagine 86. Residues 87–101 traverse the membrane as a helical segment; it reads SVYGIVFYAFQLLLG. Over 102 to 106 the chain is Cytoplasmic; sequence MTVSA. A helical transmembrane segment spans residues 107–134; that stretch reads MAALILMTTSIMSVVGSLYLGYILYFVL. At 135 to 137 the chain is on the lumenal side; sequence KDL. A disulfide bond links cysteine 138 and cysteine 141. Residues 138–159 form a helical membrane-spanning segment; it reads CVICVTTYALNFILFVLNYKRL. Cysteine 141 and tyrosine 145 together coordinate phylloquinone. Tyrosine 145 is a binding site for (S)-warfarin. Residues 160–175 are Cytoplasmic-facing; the sequence is VYLNEAWKQKLQAKQD.

This sequence belongs to the VKOR family.

The protein localises to the endoplasmic reticulum membrane. The enzyme catalyses phylloquinone + [protein]-disulfide + H2O = 2,3-epoxyphylloquinone + [protein]-dithiol. The catalysed reaction is phylloquinol + [protein]-disulfide = phylloquinone + [protein]-dithiol. Inhibited by warfarin (coumadin). Warfarin locks VKORC1 in both redox states into the closed conformation. In terms of biological role, involved in vitamin K metabolism. Can reduce inactive vitamin K 2,3-epoxide to active vitamin K, and may contribute to vitamin K-mediated protection against oxidative stress. Plays a role in vitamin K-dependent gamma-carboxylation of Glu residues in target proteins. The protein is Vitamin K epoxide reductase complex subunit 1-like protein 1 (vkorc1l1) of Takifugu rubripes (Japanese pufferfish).